Consider the following 527-residue polypeptide: MKKLLAMFFCLSVVVSAPLAMAEDAKTTEKTTDVVLIGGGIMSSTLGVYLQELQPDWSIDMVERMDNVAEESSNGWNNAGTGHSAFMELNYTPDNPDGPINISKALEITEAFEISRQFWSYQVKNGVLNNPHAFINSVPHISFVWGDENTAFLKHRYDAMQHSTLYRGMEFSDDPNTIKEWVPLVMEGRDPAQKIAATRMPIGTDVNYGEITRQLVSAMKTKSNFALHLNSEVRDIKRNADNTWSVTYADLKNGEKESVIKAKFVFIGAGGAALKLLQKSGIPEADLYGGFPVGGEFLVTENPEIVKRHMAKVYGKASVGAPPMSVPHLDTRIFDGKPVLLFGPFATFSSKFLKNGSLWDLIGSVTFSNVMPMTHVGLDNFDLVKYLVSQVMMDDDDRFASLQEYFPNAKKEDWRLTVAGQRVQVIKKDDDKGGVLKLGTEIVSSQDGSIAALLGASPGASTAAPIMLSLLEKVFKDKVATPEWQSKLKEIVPSYGQKLDGNIEMTNKIRSYTSSTLGLDYIEVKPE.

The protein belongs to the MQO family. It depends on FAD as a cofactor.

It catalyses the reaction (S)-malate + a quinone = a quinol + oxaloacetate. Its pathway is carbohydrate metabolism; tricarboxylic acid cycle; oxaloacetate from (S)-malate (quinone route): step 1/1. This chain is Probable malate:quinone oxidoreductase, found in Pectobacterium atrosepticum (strain SCRI 1043 / ATCC BAA-672) (Erwinia carotovora subsp. atroseptica).